Reading from the N-terminus, the 106-residue chain is Large ribosomal subunit protein bL21 (106 aa).

It belongs to the bacterial ribosomal protein bL21 family. Part of the 50S ribosomal subunit. Contacts protein L20.

Functionally, this protein binds to 23S rRNA in the presence of protein L20. The sequence is that of Large ribosomal subunit protein bL21 from Dichelobacter nodosus (strain VCS1703A).